The primary structure comprises 846 residues: SLIT and NTRK-like protein 2 (846 aa).

A signal peptide spans 1–21 (MLSGVWFLSVLTVAGILQTES). At 22–622 (RKTAKDICKI…LHTEVPLSVL (601 aa)) the chain is on the extracellular side. 2 cysteine pairs are disulfide-bonded: cysteine 29/cysteine 35 and cysteine 33/cysteine 46. LRR repeat units follow at residues 63–84 (RIYQLFLNGNLLTRLYPNEFVN), 87–108 (NAVTLHLGNNGLQEIRPGAFSG), 111–132 (TLKRLHLNNNKLEVLREDTFLG), 135–156 (SLEYLQADYNYISTIEAGAFSK), 159–180 (KLKVLILNDNLLLSLPSNVFRF), and 182–203 (LLTHLDLRGNRLKVMPFAGVLE). An N-linked (GlcNAc...) asparagine glycan is attached at asparagine 84. A required for interaction with PTPRD region spans residues 167–215 (DNLLLSLPSNVFRFVLLTHLDLRGNRLKVMPFAGVLEHIGGIMEIQLEE). Residues 216–265 (NPWNCTCDLLPLKAWLDTITVFVGEIVCETPFRLHGKDVTQLTRQDLCPR) enclose the LRRCT 1 domain. A glycan (N-linked (GlcNAc...) asparagine) is linked at asparagine 219. Cystine bridges form between cysteine 220–cysteine 243 and cysteine 222–cysteine 263. The disordered stretch occupies residues 261–322 (DLCPRKSASG…TPRVTVSKDR (62 aa)). 2 stretches are compositionally biased toward low complexity: residues 267–276 (SASGDSSQRS) and 285–300 (RLTPTTNPALNPTRAP). In terms of domain architecture, LRRNT spans 332-374 (QTKSPVALTCPSSCVCTSQSSDNGLNVNCQERKFTNISDLQPK). LRR repeat units follow at residues 377 to 398 (SPKKLYLTGNYLQTVYKNDLLE), 401 to 422 (SLDLLHLGNNRIAVIQEGAFTN), 425 to 446 (SLRRLYLNGNYLEVLYPSMFDG), 449 to 470 (SLQYLYLEYNVIKEIKPLTFDA), 473 to 494 (NLQLLFLNNNLLRSLPDNIFGG), and 496 to 517 (ALTRLNLRNNHFSHLPVKGVLD). An N-linked (GlcNAc...) asparagine glycan is attached at asparagine 422. In terms of domain architecture, LRRCT 2 spans 530 to 581 (NPWDCTCDIMGLKDWTEHANSPVIINEVTCESPAKHAGEILKFLGREAICPE). The helical transmembrane segment at 623 to 643 (ILGLLVVFILSVCFGAGLFVF) threads the bilayer. At 644 to 846 (VLKRRKGVPN…LEKQTAISQL (203 aa)) the chain is on the cytoplasmic side. Tyrosine 757 is subject to Phosphotyrosine.

Belongs to the SLITRK family. In terms of assembly, interacts with PTPRD; this interaction is PTPRD splicing-dependent and may induce pre-synaptic differentiation. Interacts with NTRK2. In the adult, significant expression is detected only in the brain. Broadly expressed in embryonic brain with highest expression in ventricular layer, subventricular zone, cortical plate, pyramidal layer of hippocampus, subicular neuroepithelium, thalamus, hypothalamus and spinal cord.

The protein localises to the membrane. Its subcellular location is the cell membrane. The protein resides in the cell projection. It localises to the dendrite. Its function is as follows. It is involved in synaptogenesis. Promotes excitatory synapse differentiation. Suppresses neurite outgrowth. Involved in the negative regulation of NTRK2. In Mus musculus (Mouse), this protein is SLIT and NTRK-like protein 2 (Slitrk2).